The chain runs to 818 residues: Elongation factor G, mitochondrial (818 aa).

The transit peptide at methionine 1–alanine 23 directs the protein to the mitochondrion. Residues methionine 67–asparagine 96 are disordered. The segment covering serine 69–glutamine 85 has biased composition (polar residues). One can recognise a tr-type G domain in the interval threonine 102–serine 390. GTP contacts are provided by residues alanine 111–threonine 118, aspartate 188–histidine 192, and asparagine 242–aspartate 245.

The protein belongs to the TRAFAC class translation factor GTPase superfamily. Classic translation factor GTPase family. EF-G/EF-2 subfamily.

The protein resides in the mitochondrion. It functions in the pathway protein biosynthesis; polypeptide chain elongation. In terms of biological role, mitochondrial GTPase that catalyzes the GTP-dependent ribosomal translocation step during translation elongation. During this step, the ribosome changes from the pre-translocational (PRE) to the post-translocational (POST) state as the newly formed A-site-bound peptidyl-tRNA and P-site-bound deacylated tRNA move to the P and E sites, respectively. Catalyzes the coordinated movement of the two tRNA molecules, the mRNA and conformational changes in the ribosome. This is Elongation factor G, mitochondrial from Coprinopsis cinerea (strain Okayama-7 / 130 / ATCC MYA-4618 / FGSC 9003) (Inky cap fungus).